Here is a 1087-residue protein sequence, read N- to C-terminus: Voltage-gated inwardly rectifying potassium channel KCNH3 (1087 aa).

The Cytoplasmic segment spans residues 1 to 228 (MPAMRGLLAP…HCGALRATWD (228 aa)). The region spanning 18-90 (IATRFDGTHS…QQIRKALDEH (73 aa)) is the PAS domain. In terms of domain architecture, PAC spans 93 to 145 (FKAELILYRKSGLPFWCLLDVIPIKNEKGEVALFLVSHKDISETKNRGGPDNW). Residues 137–150 (KNRGGPDNWKERGG) show a composition bias toward basic and acidic residues. The disordered stretch occupies residues 137-161 (KNRGGPDNWKERGGGRRRYGRAGSK). The helical transmembrane segment at 229-249 (GFILLATLYVAVTVPYSVCVS) threads the bilayer. At 250–259 (TAREPSAARG) the chain is on the extracellular side. A helical membrane pass occupies residues 260 to 280 (PPSVCDLAVEVLFILDIVLNF). Residues 281–302 (RTTFVSKSGQVVFAPKSICLHY) lie on the Cytoplasmic side of the membrane. Residues 303-323 (VTTWFLLDVIAALPFDLLHAF) form a helical membrane-spanning segment. Residues 324–331 (KVNVYVGA) are Extracellular-facing. The helical; Voltage-sensor transmembrane segment at 332–352 (HLLKTVRLLRLLRLLPRLDRY) threads the bilayer. At 353–361 (SQYSAVVLT) the chain is on the cytoplasmic side. Residues 362–382 (LLMAVFALLAHWVACVWFYIG) form a helical membrane-spanning segment. Residues 383–456 (QQEIENSESE…GGPSLRSAYI (74 aa)) lie on the Extracellular side of the membrane. The disordered stretch occupies residues 416-436 (SPDGGNSSGQSENCSSSGGGS). Residues 419-431 (GGNSSGQSENCSS) are compositionally biased toward low complexity. N-linked (GlcNAc...) asparagine glycans are attached at residues Asn421, Asn428, and Asn439. Positions 457-477 (TSLYFALSSLTSVGFGNVSAN) form an intramembrane region, pore-forming. Residues 468 to 473 (SVGFGN) carry the Selectivity filter motif. At 478 to 482 (TDTEK) the chain is on the extracellular side. Residues 483 to 503 (IFSICTMLIGALMHAVVFGNV) traverse the membrane as a helical segment. Residues 504–1087 (TAIIQRMYAR…QWTQEEGTGV (584 aa)) lie on the Cytoplasmic side of the membrane. An a nucleoside 3',5'-cyclic phosphate-binding site is contributed by 585–700 (LFEAASRGCL…FAPRFSRGLR (116 aa)). 2 disordered regions span residues 733-813 (EKET…LQLP) and 975-1061 (LMAP…PWDP). A compositionally biased stretch (basic residues) spans 776–788 (TAPRPRLGGRGRP).

Belongs to the potassium channel family. H (Eag) (TC 1.A.1.20) subfamily. Kv12.2/KCNH3 sub-subfamily. As to quaternary structure, the potassium channel is probably composed of a homo- or heterotetrameric complex of pore-forming alpha subunits that can associate with modulating beta subunits. Interacts with KCNE1 and KCNE3; these interactions regulate KCNH3 trafficking to the plasma membrane and its subsequent voltage-gated potassium channel activity. In terms of processing, N-glycosylated. N-glycosylation mediates traffick to the cell membrane but is not necessary for voltage-gated potassium channel activity. Highly expressed in adult and embryonic brain, in particular in cerebellum, brain stem, hippocampus, cortex and striatum. Also found in pituitary.

The protein localises to the cell membrane. The enzyme catalyses K(+)(in) = K(+)(out). Functionally, pore-forming (alpha) subunit of a voltage-gated inwardly rectifying potassium channel. Charactherized by a fast rate of activation during depolarization followed by a rapid inactivation at much more depolarized value causing inward rectification due to a C-type inactivation mechanism. Exhibits a rapid recovery from inactivation. In Rattus norvegicus (Rat), this protein is Voltage-gated inwardly rectifying potassium channel KCNH3.